Here is a 299-residue protein sequence, read N- to C-terminus: Recombination-associated protein RdgC (299 aa).

This sequence belongs to the RdgC family.

It is found in the cytoplasm. The protein resides in the nucleoid. May be involved in recombination. In Bordetella bronchiseptica (strain ATCC BAA-588 / NCTC 13252 / RB50) (Alcaligenes bronchisepticus), this protein is Recombination-associated protein RdgC.